A 144-amino-acid chain; its full sequence is Putative sugar phosphate isomerase RC0402 (144 aa).

His-12 contacts substrate. The active-site Proton donor is the His-101. Arg-135 lines the substrate pocket.

It belongs to the LacAB/RpiB family.

The polypeptide is Putative sugar phosphate isomerase RC0402 (Rickettsia conorii (strain ATCC VR-613 / Malish 7)).